Here is a 380-residue protein sequence, read N- to C-terminus: MAPNPRKSHPLLKMINNSLIDLPTPPNISAWWNFGSLLALCLMTQILTGLLLAMHYTADTTLAFSSVAHTCRNVQYGWLIRNMHANGASFFFICIYMHIGRGFYYGSYLHKETWNTGVLLLLTLMATAFVGYVLPWGQMSFWGATVITNMFSAIPYIGQTIVEWAWGGFSVDNPTLTRFFALHFLLPFMIAGLTLIHLTFLHESGSNNPLGIVSNCDKIPFHPYYSLKDILGLALLLLPLTTMALFSPNLLGDPENFTPANPLVTPPHIKPEWYFLFAYAILRSIPNKLGGVLALAASVLVLFLSPLLHKSKQRTMAFRPLSQLLFWTLVANLFILTWIGSQPVEHPFIIIGQLASTTYFTILLILFPITSALENKMLNF.

4 helical membrane-spanning segments follow: residues 34 to 54 (FGSL…LLAM), 78 to 99 (WLIR…YMHI), 114 to 134 (WNTG…GYVL), and 179 to 199 (FFAL…IHLT). Residues His84 and His98 each contribute to the heme b site. Heme b is bound by residues His183 and His197. Position 202 (His202) interacts with a ubiquinone. The next 4 helical transmembrane spans lie at 227 to 247 (LKDI…ALFS), 289 to 309 (LGGV…PLLH), 321 to 341 (LSQL…WIGS), and 348 to 368 (FIII…ILFP).

This sequence belongs to the cytochrome b family. The cytochrome bc1 complex contains 11 subunits: 3 respiratory subunits (MT-CYB, CYC1 and UQCRFS1), 2 core proteins (UQCRC1 and UQCRC2) and 6 low-molecular weight proteins (UQCRH/QCR6, UQCRB/QCR7, UQCRQ/QCR8, UQCR10/QCR9, UQCR11/QCR10 and a cleavage product of UQCRFS1). This cytochrome bc1 complex then forms a dimer. Heme b is required as a cofactor.

It is found in the mitochondrion inner membrane. Its function is as follows. Component of the ubiquinol-cytochrome c reductase complex (complex III or cytochrome b-c1 complex) that is part of the mitochondrial respiratory chain. The b-c1 complex mediates electron transfer from ubiquinol to cytochrome c. Contributes to the generation of a proton gradient across the mitochondrial membrane that is then used for ATP synthesis. The protein is Cytochrome b (MT-CYB) of Oceanodroma furcata (Fork-tailed storm-petrel).